A 415-amino-acid chain; its full sequence is ATP-dependent Clp protease ATP-binding subunit ClpX (415 aa).

The ClpX-type ZB domain maps to 1–52 (MAESKNNKKRCSFCGRSENEVGFLITGMNGYICDSCATQAYEITQEAMGAGK). Residues C11, C14, C33, and C36 each coordinate Zn(2+). Position 121-128 (121-128 (STGTGKTL)) interacts with ATP.

This sequence belongs to the ClpX chaperone family. As to quaternary structure, component of the ClpX-ClpP complex. Forms a hexameric ring that, in the presence of ATP, binds to fourteen ClpP subunits assembled into a disk-like structure with a central cavity, resembling the structure of eukaryotic proteasomes.

In terms of biological role, ATP-dependent specificity component of the Clp protease. It directs the protease to specific substrates. Can perform chaperone functions in the absence of ClpP. This Bacteroides fragilis (strain ATCC 25285 / DSM 2151 / CCUG 4856 / JCM 11019 / LMG 10263 / NCTC 9343 / Onslow / VPI 2553 / EN-2) protein is ATP-dependent Clp protease ATP-binding subunit ClpX.